Reading from the N-terminus, the 425-residue chain is DNA replication and repair protein RecF (425 aa).

30-37 is a binding site for ATP; that stretch reads GPNGHGKT.

It belongs to the RecF family.

It localises to the cytoplasm. The RecF protein is involved in DNA metabolism; it is required for DNA replication and normal SOS inducibility. RecF binds preferentially to single-stranded, linear DNA. It also seems to bind ATP. This is DNA replication and repair protein RecF from Corynebacterium jeikeium (strain K411).